Reading from the N-terminus, the 32-residue chain is Photosystem I reaction center subunit XII (32 aa).

A helical membrane pass occupies residues 9–31; it reads VYVALVSALITSFLAVRLGLALY.

It belongs to the PsaM family.

It localises to the plastid. The protein localises to the chloroplast thylakoid membrane. In Chaetosphaeridium globosum (Charophycean green alga), this protein is Photosystem I reaction center subunit XII.